Reading from the N-terminus, the 1207-residue chain is DNA-directed RNA polymerase subunit beta' (1207 aa).

4 residues coordinate Zn(2+): Cys-60, Cys-62, Cys-75, and Cys-78. Mg(2+) is bound by residues Asp-450, Asp-452, and Asp-454. Zn(2+) is bound by residues Cys-819, Cys-893, Cys-900, and Cys-903.

It belongs to the RNA polymerase beta' chain family. The RNAP catalytic core consists of 2 alpha, 1 beta, 1 beta' and 1 omega subunit. When a sigma factor is associated with the core the holoenzyme is formed, which can initiate transcription. It depends on Mg(2+) as a cofactor. The cofactor is Zn(2+).

The catalysed reaction is RNA(n) + a ribonucleoside 5'-triphosphate = RNA(n+1) + diphosphate. In terms of biological role, DNA-dependent RNA polymerase catalyzes the transcription of DNA into RNA using the four ribonucleoside triphosphates as substrates. The polypeptide is DNA-directed RNA polymerase subunit beta' (Streptococcus pyogenes serotype M3 (strain ATCC BAA-595 / MGAS315)).